The following is a 612-amino-acid chain: FAD-linked oxidoreductase easE (612 aa).

Positions 129 to 313 constitute an FAD-binding PCMH-type domain; that stretch reads HQGRIPLYSA…TRATMRVFPD (185 aa).

The protein belongs to the oxygen-dependent FAD-linked oxidoreductase family. It depends on FAD as a cofactor.

Its pathway is alkaloid biosynthesis; ergot alkaloid biosynthesis. In terms of biological role, FAD-linked oxidoreductase; part of the gene cluster that mediates the biosynthesis of fungal ergot alkaloid. DmaW catalyzes the first step of ergot alkaloid biosynthesis by condensing dimethylallyl diphosphate (DMAP) and tryptophan to form 4-dimethylallyl-L-tryptophan. The second step is catalyzed by the methyltransferase easF that methylates 4-dimethylallyl-L-tryptophan in the presence of S-adenosyl-L-methionine, resulting in the formation of 4-dimethylallyl-L-abrine. The catalase easC and the FAD-dependent oxidoreductase easE then transform 4-dimethylallyl-L-abrine to chanoclavine-I which is further oxidized by easD in the presence of NAD(+), resulting in the formation of chanoclavine-I aldehyde. Chanoclavine-I aldehyde is the precursor of ergoamides and ergopeptines in Clavicipitaceae, and clavine-type alcaloids such as fumiclavine in Trichocomaceae. However, the metabolites downstream of chanoclavine-I aldehyde in Arthrodermataceae have not been identified yet. This chain is FAD-linked oxidoreductase easE, found in Arthroderma otae (strain ATCC MYA-4605 / CBS 113480) (Microsporum canis).